The primary structure comprises 323 residues: Ribonuclease Z (323 aa).

Residues His-62, His-64, Asp-66, His-67, His-144, Asp-215, and His-273 each contribute to the Zn(2+) site. Catalysis depends on Asp-66, which acts as the Proton acceptor.

The protein belongs to the RNase Z family. Homodimer. It depends on Zn(2+) as a cofactor.

The catalysed reaction is Endonucleolytic cleavage of RNA, removing extra 3' nucleotides from tRNA precursor, generating 3' termini of tRNAs. A 3'-hydroxy group is left at the tRNA terminus and a 5'-phosphoryl group is left at the trailer molecule.. Functionally, zinc phosphodiesterase, which displays some tRNA 3'-processing endonuclease activity. Probably involved in tRNA maturation, by removing a 3'-trailer from precursor tRNA. The sequence is that of Ribonuclease Z from Synechococcus sp. (strain WH7803).